The sequence spans 367 residues: Phosphoribosylaminoimidazole-succinocarboxamide synthase (367 aa).

It belongs to the SAICAR synthetase family.

It catalyses the reaction 5-amino-1-(5-phospho-D-ribosyl)imidazole-4-carboxylate + L-aspartate + ATP = (2S)-2-[5-amino-1-(5-phospho-beta-D-ribosyl)imidazole-4-carboxamido]succinate + ADP + phosphate + 2 H(+). It participates in purine metabolism; IMP biosynthesis via de novo pathway; 5-amino-1-(5-phospho-D-ribosyl)imidazole-4-carboxamide from 5-amino-1-(5-phospho-D-ribosyl)imidazole-4-carboxylate: step 1/2. This Shewanella sp. (strain MR-7) protein is Phosphoribosylaminoimidazole-succinocarboxamide synthase.